The chain runs to 243 residues: Ubiquinone/menaquinone biosynthesis C-methyltransferase UbiE (243 aa).

Residues T69, D90, and 116-117 (DA) each bind S-adenosyl-L-methionine.

It belongs to the class I-like SAM-binding methyltransferase superfamily. MenG/UbiE family.

It catalyses the reaction a 2-demethylmenaquinol + S-adenosyl-L-methionine = a menaquinol + S-adenosyl-L-homocysteine + H(+). It carries out the reaction a 2-methoxy-6-(all-trans-polyprenyl)benzene-1,4-diol + S-adenosyl-L-methionine = a 5-methoxy-2-methyl-3-(all-trans-polyprenyl)benzene-1,4-diol + S-adenosyl-L-homocysteine + H(+). Its pathway is quinol/quinone metabolism; menaquinone biosynthesis; menaquinol from 1,4-dihydroxy-2-naphthoate: step 2/2. The protein operates within cofactor biosynthesis; ubiquinone biosynthesis. Methyltransferase required for the conversion of demethylmenaquinol (DMKH2) to menaquinol (MKH2) and the conversion of 2-polyprenyl-6-methoxy-1,4-benzoquinol (DDMQH2) to 2-polyprenyl-3-methyl-6-methoxy-1,4-benzoquinol (DMQH2). This Burkholderia cenocepacia (strain HI2424) protein is Ubiquinone/menaquinone biosynthesis C-methyltransferase UbiE.